The chain runs to 113 residues: Carboxysome shell protein CcmK4 (113 aa).

A BMC domain is found at 5–91; it reads AIGSLETKGF…PHENVEAVFP (87 aa).

Belongs to the bacterial microcompartments protein family. CcmK subfamily. In terms of assembly, homohexamer. Interacts stably with CcmK3, probably forms heterohexamers with a 1:2 CcmK3:CcmK4 stoichiometry.

It is found in the carboxysome. In terms of biological role, one of the shell proteins of the carboxysome, a polyhedral inclusion where RuBisCO (ribulose bisphosphate carboxylase, rbcL-rbcS) is sequestered. Assembles into hexamers which make sheets that form the facets of the polyhedral carboxysome. The hexamer central pore probably regulates metabolite flux. Its function is as follows. A minor shell protein of the carboxysome, a polyhedral inclusion where RuBisCO (ribulose bisphosphate carboxylase, rbcL-rbcS) is sequestered. Hexamers form sheets that form the facets of the polyhedral carboxysome. The shell is 4.5 nm thick, as observed for CcmK proteins. In PCC 7942 there are several CcmK paralogs with presumably functional differences; replacing the central pore residues (34-37) with those of CcmK2 from this organism (Tyr-Glu-Lys-Ile) allows the bacterium to make carboxysomes, but the expression level is too low to know if the carboxysome is functional for CO(2) fixation. This subunit probably makes both homohexamers and heterohexamers with CcmK3. The CcmK3-CcmK4 heterohexmers have been suggested to cap other hexamers, perhaps to alter metabolite flux. The protein is Carboxysome shell protein CcmK4 of Synechococcus elongatus (strain ATCC 33912 / PCC 7942 / FACHB-805) (Anacystis nidulans R2).